The primary structure comprises 338 residues: Ketol-acid reductoisomerase (NADP(+)) (338 aa).

One can recognise a KARI N-terminal Rossmann domain in the interval 1-181 (MKVYYENDAD…GGTKAGVIET (181 aa)). Residues 24-27 (FGSQ), lysine 47, serine 50, serine 52, and 82-85 (DQVQ) each bind NADP(+). Residue histidine 107 is part of the active site. Glycine 133 is an NADP(+) binding site. The KARI C-terminal knotted domain maps to 182–327 (NFKDETETDL…EKLRGMMSWL (146 aa)). 4 residues coordinate Mg(2+): aspartate 190, glutamate 194, glutamate 226, and glutamate 230. Substrate is bound at residue serine 251.

The protein belongs to the ketol-acid reductoisomerase family. Requires Mg(2+) as cofactor.

The enzyme catalyses (2R)-2,3-dihydroxy-3-methylbutanoate + NADP(+) = (2S)-2-acetolactate + NADPH + H(+). The catalysed reaction is (2R,3R)-2,3-dihydroxy-3-methylpentanoate + NADP(+) = (S)-2-ethyl-2-hydroxy-3-oxobutanoate + NADPH + H(+). It functions in the pathway amino-acid biosynthesis; L-isoleucine biosynthesis; L-isoleucine from 2-oxobutanoate: step 2/4. Its pathway is amino-acid biosynthesis; L-valine biosynthesis; L-valine from pyruvate: step 2/4. Functionally, involved in the biosynthesis of branched-chain amino acids (BCAA). Catalyzes an alkyl-migration followed by a ketol-acid reduction of (S)-2-acetolactate (S2AL) to yield (R)-2,3-dihydroxy-isovalerate. In the isomerase reaction, S2AL is rearranged via a Mg-dependent methyl migration to produce 3-hydroxy-3-methyl-2-ketobutyrate (HMKB). In the reductase reaction, this 2-ketoacid undergoes a metal-dependent reduction by NADPH to yield (R)-2,3-dihydroxy-isovalerate. The polypeptide is Ketol-acid reductoisomerase (NADP(+)) (Chloroherpeton thalassium (strain ATCC 35110 / GB-78)).